The following is a 311-amino-acid chain: tRNA-cytidine(32) 2-sulfurtransferase (311 aa).

The short motif at 47–52 is the PP-loop motif element; the sequence is SGGKDS. [4Fe-4S] cluster contacts are provided by Cys122, Cys125, and Cys213.

The protein belongs to the TtcA family. In terms of assembly, homodimer. Mg(2+) is required as a cofactor. [4Fe-4S] cluster serves as cofactor.

Its subcellular location is the cytoplasm. It catalyses the reaction cytidine(32) in tRNA + S-sulfanyl-L-cysteinyl-[cysteine desulfurase] + AH2 + ATP = 2-thiocytidine(32) in tRNA + L-cysteinyl-[cysteine desulfurase] + A + AMP + diphosphate + H(+). The protein operates within tRNA modification. Catalyzes the ATP-dependent 2-thiolation of cytidine in position 32 of tRNA, to form 2-thiocytidine (s(2)C32). The sulfur atoms are provided by the cysteine/cysteine desulfurase (IscS) system. In Salmonella dublin (strain CT_02021853), this protein is tRNA-cytidine(32) 2-sulfurtransferase.